The sequence spans 241 residues: tRNA pseudouridine synthase B (241 aa).

Asp-45 functions as the Nucleophile in the catalytic mechanism.

The protein belongs to the pseudouridine synthase TruB family. Type 1 subfamily.

The catalysed reaction is uridine(55) in tRNA = pseudouridine(55) in tRNA. Its function is as follows. Responsible for synthesis of pseudouridine from uracil-55 in the psi GC loop of transfer RNAs. The chain is tRNA pseudouridine synthase B from Chlamydia trachomatis serovar L2 (strain ATCC VR-902B / DSM 19102 / 434/Bu).